A 256-amino-acid polypeptide reads, in one-letter code: Cytokine-inducible SH2-containing protein (256 aa).

The SH2 domain occupies 81-162 (WYWGSITASE…PDVVSLVQHY (82 aa)). The segment at 168–190 (ADTRSDSPDPAPTPALPVSKPDA) is disordered. An SOCS box domain is found at 207–255 (KLVQPFVRRSSARSLQHLCRLVINRLVTDVDCLPLPRRMADYLRQYPFQ).

Stably associated with the tyrosine-phosphorylated IL3 receptor beta chain and tyrosine-phosphorylated EPO receptor (EPOR).

It participates in protein modification; protein ubiquitination. Its function is as follows. SOCS family proteins form part of a classical negative feedback system that regulates cytokine signal transduction. CIS is involved in the negative regulation of cytokines that signal through the JAK-STAT5 pathway such as erythropoietin, prolactin and interleukin 3 (IL3) receptor. Inhibits STAT5 trans-activation by suppressing its tyrosine phosphorylation. May be a substrate recognition component of a SCF-like ECS (Elongin BC-CUL2/5-SOCS-box protein) E3 ubiquitin-protein ligase complex which mediates the ubiquitination and subsequent proteasomal degradation of target proteins. The sequence is that of Cytokine-inducible SH2-containing protein (Cish) from Rattus norvegicus (Rat).